A 357-amino-acid chain; its full sequence is Carbamoyl phosphate synthase small chain (357 aa).

The CPSase stretch occupies residues 1–168 (MSKRLLILED…STTTAYPSPN (168 aa)). The L-glutamine site is built by Ser-46, Gly-220, and Gly-222. Positions 172-357 (KVVVVDFGLK…FMDLMDNFKK (186 aa)) constitute a Glutamine amidotransferase type-1 domain. The Nucleophile role is filled by Cys-247. L-glutamine is bound by residues Leu-248, Gln-251, Asn-289, Gly-291, and Tyr-292. Active-site residues include His-331 and Asp-333.

Belongs to the CarA family. In terms of assembly, composed of two chains; the small (or glutamine) chain promotes the hydrolysis of glutamine to ammonia, which is used by the large (or ammonia) chain to synthesize carbamoyl phosphate. Tetramer of heterodimers (alpha,beta)4.

The catalysed reaction is hydrogencarbonate + L-glutamine + 2 ATP + H2O = carbamoyl phosphate + L-glutamate + 2 ADP + phosphate + 2 H(+). It carries out the reaction L-glutamine + H2O = L-glutamate + NH4(+). It functions in the pathway amino-acid biosynthesis; L-arginine biosynthesis; carbamoyl phosphate from bicarbonate: step 1/1. It participates in pyrimidine metabolism; UMP biosynthesis via de novo pathway; (S)-dihydroorotate from bicarbonate: step 1/3. In terms of biological role, small subunit of the glutamine-dependent carbamoyl phosphate synthetase (CPSase). CPSase catalyzes the formation of carbamoyl phosphate from the ammonia moiety of glutamine, carbonate, and phosphate donated by ATP, constituting the first step of 2 biosynthetic pathways, one leading to arginine and/or urea and the other to pyrimidine nucleotides. The small subunit (glutamine amidotransferase) binds and cleaves glutamine to supply the large subunit with the substrate ammonia. This Lactococcus lactis subsp. lactis (strain IL1403) (Streptococcus lactis) protein is Carbamoyl phosphate synthase small chain.